Reading from the N-terminus, the 343-residue chain is Phosphoglycerate mutase-like protein 2 (343 aa).

A chloroplast-targeting transit peptide spans 1–35 (MIHQSMTSNLSFYISSVSHLSSPLPSLSRLSLRCC). His65 serves as the catalytic Tele-phosphohistidine intermediate. Catalysis depends on Glu177, which acts as the Proton donor/acceptor. The segment at 322–343 (MTNYPGTILTGEDASSDIADQK) is disordered.

Belongs to the phosphoglycerate mutase family.

The protein resides in the plastid. The protein localises to the chloroplast. Its function is as follows. May play a role in carbohydrates metabolism. This is Phosphoglycerate mutase-like protein 2 from Arabidopsis thaliana (Mouse-ear cress).